The sequence spans 121 residues: Nitrogen fixation nifHD region GlnB-like protein 2 (121 aa).

The protein belongs to the P(II) protein family.

Its function is as follows. Could be involved in the regulation of nitrogen fixation. In Methanothermobacter marburgensis (strain ATCC BAA-927 / DSM 2133 / JCM 14651 / NBRC 100331 / OCM 82 / Marburg) (Methanobacterium thermoautotrophicum), this protein is Nitrogen fixation nifHD region GlnB-like protein 2 (glnBB).